We begin with the raw amino-acid sequence, 958 residues long: Probable transport protein MmpL1 (958 aa).

The next 12 membrane-spanning stretches (helical) occupy residues 19–39 (ALSL…NVVA), 192–212 (SLHT…FIAY), 216–236 (SAAL…RGII), 252–272 (VNVL…FLVG), 295–315 (TAHV…CLGF), 329–349 (AIGL…IIAV), 377–397 (WPGP…LALP), 762–782 (YDVM…MLGI), 791–811 (VIVG…VLIW), 814–834 (ILHM…MLAV), 868–888 (VVTI…ASDL), and 906–927 (TLVV…WFWW).

It belongs to the resistance-nodulation-cell division (RND) (TC 2.A.6) family. MmpL subfamily.

The protein localises to the cell membrane. The chain is Probable transport protein MmpL1 (mmpL1) from Mycobacterium tuberculosis (strain CDC 1551 / Oshkosh).